The sequence spans 366 residues: Carbamoyl phosphate synthase small chain (366 aa).

The segment at 1–171 is CPSase; that stretch reads MLEKRYLVLE…KTPYVSTGSD (171 aa). L-glutamine-binding residues include S47, G221, and G223. A Glutamine amidotransferase type-1 domain is found at 173 to 360; the sequence is SVVLLDFGKK…IAMMKDFKEK (188 aa). The active-site Nucleophile is C248. L-glutamine is bound by residues L249, Q252, N290, G292, and Y293. Active-site residues include H333 and E335.

This sequence belongs to the CarA family. As to quaternary structure, composed of two chains; the small (or glutamine) chain promotes the hydrolysis of glutamine to ammonia, which is used by the large (or ammonia) chain to synthesize carbamoyl phosphate. Tetramer of heterodimers (alpha,beta)4.

The catalysed reaction is hydrogencarbonate + L-glutamine + 2 ATP + H2O = carbamoyl phosphate + L-glutamate + 2 ADP + phosphate + 2 H(+). It carries out the reaction L-glutamine + H2O = L-glutamate + NH4(+). It functions in the pathway amino-acid biosynthesis; L-arginine biosynthesis; carbamoyl phosphate from bicarbonate: step 1/1. Its pathway is pyrimidine metabolism; UMP biosynthesis via de novo pathway; (S)-dihydroorotate from bicarbonate: step 1/3. Its function is as follows. Small subunit of the glutamine-dependent carbamoyl phosphate synthetase (CPSase). CPSase catalyzes the formation of carbamoyl phosphate from the ammonia moiety of glutamine, carbonate, and phosphate donated by ATP, constituting the first step of 2 biosynthetic pathways, one leading to arginine and/or urea and the other to pyrimidine nucleotides. The small subunit (glutamine amidotransferase) binds and cleaves glutamine to supply the large subunit with the substrate ammonia. This chain is Carbamoyl phosphate synthase small chain, found in Staphylococcus epidermidis (strain ATCC 12228 / FDA PCI 1200).